We begin with the raw amino-acid sequence, 555 residues long: Transmembrane protein 87B (555 aa).

Positions 1–42 (MAAACRSEAGLLPSLLCRRPAGAQLLRVALCLLCWVPAAVDA) are cleaved as a signal peptide. Residues 43–216 (VPELGLWTRT…HGYISASDWP (174 aa)) are Lumenal-facing. 3 N-linked (GlcNAc...) asparagine glycosylation sites follow: Asn68, Asn160, and Asn198. The chain crosses the membrane as a helical span at residues 217 to 237 (LMIFYMVMCIVYILYGVLWLL). Residues 238 to 248 (WSACYWKDILR) are Cytoplasmic-facing. A helical transmembrane segment spans residues 249-269 (IQFWIAAVIFLGMLEKAVFYS). The Lumenal segment spans residues 270–300 (EYQNINSTGLSTQGLLIFAELISAVKRTLAR). An N-linked (GlcNAc...) asparagine glycan is attached at Asn275. The helical transmembrane segment at 301–321 (LLVIIVSLGYGIVKPRLGTVM) threads the bilayer. The Cytoplasmic portion of the chain corresponds to 322–323 (HR). Residues 324–344 (VIGLGLLYLIFAAIEGVMRVI) traverse the membrane as a helical segment. At 345 to 351 (GGSKHLA) the chain is on the lumenal side. Residues 352–372 (VVLTDIVLAVIDSIFVWFIFI) traverse the membrane as a helical segment. The Cytoplasmic portion of the chain corresponds to 373–394 (SLAQTMKTLRLRKNTVKFSLYR). The helical transmembrane segment at 395 to 415 (HFTNTLIFAVLASIVFMVWTT) threads the bilayer. The Lumenal portion of the chain corresponds to 416–429 (KTFRIAKCQSDWME). A helical transmembrane segment spans residues 430-450 (LWVDDAFWSFLFSVILIVIMF). Residues 451 to 555 (LWRPSANNQR…EKMFSSEKIM (105 aa)) lie on the Cytoplasmic side of the membrane. Phosphoserine is present on residues Ser470, Ser497, and Ser534.

The protein belongs to the LU7TM family. TMEM87 subfamily.

Its subcellular location is the golgi apparatus membrane. Functionally, may be involved in retrograde transport from endosomes to the trans-Golgi network (TGN). The chain is Transmembrane protein 87B from Mus musculus (Mouse).